A 902-amino-acid polypeptide reads, in one-letter code: Ribonuclease E (902 aa).

The S1 motif domain occupies 39–119 (SNIYKGKITR…GTKGAALTTF (81 aa)). Residues D303 and D346 each coordinate Mg(2+). Residues C404 and C407 each coordinate Zn(2+). A required for zinc-mediated homotetramerization and catalytic activity region spans residues 404-407 (CPRC). The interval 881-902 (GKNSAGVHSATNFSNSPVSKLK) is disordered. The segment covering 889 to 902 (SATNFSNSPVSKLK) has biased composition (polar residues).

Belongs to the RNase E/G family. RNase E subfamily. As to quaternary structure, component of the RNA degradosome, which is a multiprotein complex involved in RNA processing and mRNA degradation. Within the RNA degradosome, RNase E assembles into a homotetramer formed by a dimer of dimers. Zn(2+) is required as a cofactor. Requires Mg(2+) as cofactor.

Its subcellular location is the cytoplasm. It localises to the cell inner membrane. The enzyme catalyses Endonucleolytic cleavage of single-stranded RNA in A- and U-rich regions.. In terms of biological role, endoribonuclease that plays a central role in RNA processing and decay. Required for the maturation of 5S and 16S rRNAs and the majority of tRNAs. Also involved in the degradation of most mRNAs. This chain is Ribonuclease E, found in Buchnera aphidicola subsp. Acyrthosiphon pisum (strain APS) (Acyrthosiphon pisum symbiotic bacterium).